The chain runs to 631 residues: Golgin subfamily A member 8R (631 aa).

Positions 1-72 (MAEETQHNKL…REGPTSSATL (72 aa)) are disordered. Positions 38–50 (TNGSIPETATSGG) are enriched in polar residues. Coiled-coil stretches lie at residues 85-149 (VLDS…NTDL), 209-247 (ELEQ…HIEG), and 303-419 (SEVE…LSLM). Disordered stretches follow at residues 422–451 (PGEG…DPES), 502–523 (AKDA…DEGE), and 551–610 (NSAD…QEHP). The span at 507–519 (LGGGHHQAGAQGG) shows a compositional bias: gly residues. Residues 568–577 (AADKHGDLRE) show a composition bias toward basic and acidic residues.

The protein belongs to the GOLGA8 family.

This Homo sapiens (Human) protein is Golgin subfamily A member 8R.